The sequence spans 469 residues: Solute carrier family 52, riboflavin transporter, member 3 (469 aa).

At 1-2 the chain is on the cytoplasmic side; sequence MA. Residues 3–23 form a helical membrane-spanning segment; sequence FLMHLLVCVFGMGSWVTINGL. The Extracellular portion of the chain corresponds to 24–43; it reads WVELPLLVMELPEGWYLPSY. Residues 44–64 traverse the membrane as a helical segment; the sequence is LTVVIQLANIGPLLVTLLHHF. Residues 65 to 71 are Cytoplasmic-facing; the sequence is RPSCLSE. A helical membrane pass occupies residues 72–92; that stretch reads VPIIFTLLGVGTVTCIIFAFL. Residues 93 to 97 lie on the Extracellular side of the membrane; the sequence is WNMTS. N-linked (GlcNAc...) asparagine glycosylation is present at Asn94. The chain crosses the membrane as a helical span at residues 98–118; it reads WVLDGHHSIAFLVLTFFLALV. Residues 119-137 lie on the Cytoplasmic side of the membrane; sequence DCTSSVTFLPFMSRLPTYY. Residues 138 to 158 traverse the membrane as a helical segment; sequence LTTFFVGEGLSGLLPALVALA. Topologically, residues 159-220 are extracellular; that stretch reads QGSGLTTCVN…SRYLPAHFSP (62 aa). N-linked (GlcNAc...) asparagine glycosylation is present at Asn168. The chain crosses the membrane as a helical span at residues 221-241; sequence LVFFLLLSIMMACCLVAFFVL. At 242–292 the chain is on the cytoplasmic side; that stretch reads QRQPRCWEASVEDLLNDQVTLHSIRPREENDLGPAGTVDSSQGQGYLEEKA. At Ser251 the chain carries Phosphoserine. A helical transmembrane segment spans residues 293 to 313; sequence APCCPAHLAFIYTLVAFVNAL. The Extracellular segment spans residues 314 to 335; sequence TNGMLPSVQTYSCLSYGPVAYH. A helical transmembrane segment spans residues 336 to 356; the sequence is LAATLSIVANPLASLVSMFLP. Residues 357–359 are Cytoplasmic-facing; the sequence is NRS. A helical transmembrane segment spans residues 360–380; that stretch reads LLFLGVLSVLGTCFGGYNMAM. Residues 381–396 lie on the Extracellular side of the membrane; sequence AVMSPCPLLQGHWGGE. A disulfide bond links Cys386 and Cys463. A helical transmembrane segment spans residues 397–417; sequence VLIVASWVLFSGCLSYVKVML. At 418-427 the chain is on the cytoplasmic side; it reads GVVLRDLSRS. The chain crosses the membrane as a helical span at residues 428 to 448; that stretch reads ALLWCGAAVQLGSLLGALLMF. Residues 449 to 469 lie on the Extracellular side of the membrane; it reads PLVNVLRLFSSADFCNLHCPA.

The protein belongs to the riboflavin transporter family. As to expression, predominantly expressed in testis. Highly expressed in small intestine and prostate.

Its subcellular location is the apical cell membrane. The protein localises to the cell membrane. It localises to the nucleus membrane. The protein resides in the cytoplasm. The catalysed reaction is riboflavin(in) = riboflavin(out). Activity is strongly inhibited by riboflavin analogs, such as lumiflavin, flavin mononucleotide (FMN), flavin adenine dinucleotide (FAD), by methylene blue, and to a lesser extent by amiloride. Riboflavin transport is Na(+)-independent at low pH but significantly reduced by Na(+) depletion under neutral pH conditions. Its function is as follows. Plasma membrane transporter mediating the uptake by cells of the water soluble vitamin B2/riboflavin that plays a key role in biochemical oxidation-reduction reactions of the carbohydrate, lipid, and amino acid metabolism. Humans are unable to synthesize vitamin B2/riboflavin and must obtain it via intestinal absorption. This chain is Solute carrier family 52, riboflavin transporter, member 3 (SLC52A3), found in Homo sapiens (Human).